Consider the following 582-residue polypeptide: Poly(A) RNA polymerase, mitochondrial (582 aa).

The transit peptide at 1–37 (MAVPGVGLLTRLNLCARRRTRVQRPIVRLLSCPGTVA) directs the protein to the mitochondrion. N6-acetyllysine is present on lysine 90. ATP contacts are provided by residues 107–109 (YES) and 241–242 (GC). Mg(2+) is bound by residues aspartate 243 and aspartate 245. A PAP-associated domain is found at 437 to 483 (LELLLKEFFEYFGNFAFDKNSINIRQGREQNKPDSSPLYIQNPFETS).

The protein belongs to the DNA polymerase type-B-like family. As to quaternary structure, homodimer. Requires Mg(2+) as cofactor. The cofactor is Mn(2+). In terms of tissue distribution, ubiquitous, with stronger expression in tissues with high energy requirements: heart, brain, and skeletal muscle.

It is found in the cytoplasm. The protein resides in the mitochondrion. It carries out the reaction RNA(n) + ATP = RNA(n)-3'-adenine ribonucleotide + diphosphate. Functionally, polymerase that creates the 3' poly(A) tail of mitochondrial transcripts. Can use all four nucleotides, but has higher activity with ATP and UTP (in vitro). Plays a role in replication-dependent histone mRNA degradation. May be involved in the terminal uridylation of mature histone mRNAs before their degradation is initiated. Might be responsible for the creation of some UAA stop codons which are not encoded in mtDNA. This Homo sapiens (Human) protein is Poly(A) RNA polymerase, mitochondrial (MTPAP).